A 189-amino-acid chain; its full sequence is Large ribosomal subunit protein eL18 (189 aa).

The protein belongs to the eukaryotic ribosomal protein eL18 family.

It localises to the cytoplasm. In Anopheles gambiae (African malaria mosquito), this protein is Large ribosomal subunit protein eL18 (RpL18).